Consider the following 477-residue polypeptide: UDP-N-acetylmuramate--L-alanine ligase (477 aa).

Residue 122 to 128 participates in ATP binding; it reads GTHGKTT.

The protein belongs to the MurCDEF family.

The protein resides in the cytoplasm. The enzyme catalyses UDP-N-acetyl-alpha-D-muramate + L-alanine + ATP = UDP-N-acetyl-alpha-D-muramoyl-L-alanine + ADP + phosphate + H(+). The protein operates within cell wall biogenesis; peptidoglycan biosynthesis. Its function is as follows. Cell wall formation. The sequence is that of UDP-N-acetylmuramate--L-alanine ligase from Xanthomonas axonopodis pv. citri (strain 306).